Here is a 119-residue protein sequence, read N- to C-terminus: Protein phosphatase EYA4 (119 aa).

It belongs to the HAD-like hydrolase superfamily. EYA family. Requires Mg(2+) as cofactor.

The protein resides in the cytoplasm. The protein localises to the nucleus. It carries out the reaction O-phospho-L-tyrosyl-[protein] + H2O = L-tyrosyl-[protein] + phosphate. Its function is as follows. Tyrosine phosphatase that specifically dephosphorylates 'Tyr-142' of histone H2AX (H2AXY142ph). 'Tyr-142' phosphorylation of histone H2AX plays a central role in DNA repair and acts as a mark that distinguishes between apoptotic and repair responses to genotoxic stress. Promotes efficient DNA repair by dephosphorylating H2AX, promoting the recruitment of DNA repair complexes containing MDC1. Its function as histone phosphatase probably explains its role in transcription regulation during organogenesis. May be involved in development of the eye. This chain is Protein phosphatase EYA4 (EYA4), found in Gallus gallus (Chicken).